Consider the following 110-residue polypeptide: Iron-sulfur cluster assembly protein CyaY (110 aa).

Belongs to the frataxin family.

Functionally, involved in iron-sulfur (Fe-S) cluster assembly. May act as a regulator of Fe-S biogenesis. The chain is Iron-sulfur cluster assembly protein CyaY from Pseudomonas syringae pv. syringae (strain B728a).